The primary structure comprises 236 residues: Sperm flagellar protein 1 (236 aa).

The 106-residue stretch at 7 to 112 (EEALHQLYLW…VLIPLRQRLE (106 aa)) folds into the Calponin-homology (CH) domain. The segment at 115–176 (QRRRKQGAGS…PRPPAYNRAL (62 aa)) is disordered. The interval 183 to 236 (VLQIAEKEQELLASQETVQVLQMKVRRLEHLLQLKNVRIEDLSRRLQQAERKQR) is essential for homodimerization and microtubule bundling activity.

Homodimer. Interacts with actin, TJP1, CGN and CDH1. Expressed in the intestinal epithelial cells (at protein level).

It is found in the cytoplasm. It localises to the cell projection. The protein resides in the cilium. Its subcellular location is the flagellum. The protein localises to the cytoskeleton. It is found in the cilium axoneme. It localises to the apical cell membrane. The protein resides in the basolateral cell membrane. Its subcellular location is the stress fiber. The protein localises to the microvillus. It is found in the lamellipodium. It localises to the filopodium. In terms of biological role, microtubule-associated protein involved in the stabilization of microtubules along the axis of migration during radial intercalation. Promotes the establishment and stabilization of an axis of microtubules required for the active migration of cells into the outer epithelium. Microtubule-associated protein that promotes microtubule bundling and stabilizes microtubules against depolymerization in response to cold shock. Essential for ciliary central apparatus formation which requires both its microtubule-binding and bundling activities and for ciliary localization of HYDIN and SPAG6 in ependymal cilia. Binds actin in intestinal epithelial cells (IECs), essential for IECs survival and contributes to formation of filopodia and lamellipodia in migrating IECs. Regulates planar cell polarity signaling pathway and asymmetric microtubule accumulation in ciliated epithelia. The chain is Sperm flagellar protein 1 (SPEF1) from Homo sapiens (Human).